A 507-amino-acid chain; its full sequence is Maturase K (507 aa).

It belongs to the intron maturase 2 family. MatK subfamily.

It is found in the plastid. Its subcellular location is the chloroplast. In terms of biological role, usually encoded in the trnK tRNA gene intron. Probably assists in splicing its own and other chloroplast group II introns. In Persea americana (Avocado), this protein is Maturase K.